Consider the following 386-residue polypeptide: Chaperone protein DnaJ (386 aa).

Residues 4–68 (NFYDVLGVSR…QKRQQYDQLG (65 aa)) form the J domain. Composition is skewed to basic and acidic residues over residues 22–35 (KAYR…HPDV) and 43–79 (ERFK…DKRG). The tract at residues 22 to 132 (KAYRKQAAEH…GGNRPRQGQD (111 aa)) is disordered. Gly residues-rich tracts occupy residues 80–104 (ATGG…GAGG) and 113–125 (FGGG…GGGN). The CR-type zinc finger occupies 147–229 (GATKEVTLTR…CGGDGVVREE (83 aa)). Residues Cys-160, Cys-163, Cys-177, Cys-180, Cys-203, Cys-206, Cys-217, and Cys-220 each contribute to the Zn(2+) site. CXXCXGXG motif repeat units follow at residues 160 to 167 (CDTCDGAG), 177 to 184 (CSQCNGRG), 203 to 210 (CPRCEGSG), and 217 to 224 (CADCGGDG).

Belongs to the DnaJ family. Homodimer. Zn(2+) serves as cofactor.

The protein localises to the cytoplasm. Functionally, participates actively in the response to hyperosmotic and heat shock by preventing the aggregation of stress-denatured proteins and by disaggregating proteins, also in an autonomous, DnaK-independent fashion. Unfolded proteins bind initially to DnaJ; upon interaction with the DnaJ-bound protein, DnaK hydrolyzes its bound ATP, resulting in the formation of a stable complex. GrpE releases ADP from DnaK; ATP binding to DnaK triggers the release of the substrate protein, thus completing the reaction cycle. Several rounds of ATP-dependent interactions between DnaJ, DnaK and GrpE are required for fully efficient folding. Also involved, together with DnaK and GrpE, in the DNA replication of plasmids through activation of initiation proteins. This Halorubrum lacusprofundi (strain ATCC 49239 / DSM 5036 / JCM 8891 / ACAM 34) protein is Chaperone protein DnaJ.